A 270-amino-acid chain; its full sequence is Urease accessory protein UreD (270 aa).

The protein belongs to the UreD family. As to quaternary structure, ureD, UreF and UreG form a complex that acts as a GTP-hydrolysis-dependent molecular chaperone, activating the urease apoprotein by helping to assemble the nickel containing metallocenter of UreC. The complex may form in the order UreABCD, UreABCDF, UreABCDFG. The UreE protein probably delivers the nickel in a GTPase-dependent fashion.

It is found in the cytoplasm. Necessary for the functional incorporation of the urease nickel metallocenter. The protein is Urease accessory protein UreD of Klebsiella aerogenes (Enterobacter aerogenes).